A 113-amino-acid polypeptide reads, in one-letter code: Iron-sulfur cluster insertion protein ErpA (113 aa).

3 residues coordinate iron-sulfur cluster: cysteine 41, cysteine 105, and cysteine 107.

This sequence belongs to the HesB/IscA family. In terms of assembly, homodimer. Requires iron-sulfur cluster as cofactor.

Its function is as follows. Required for insertion of 4Fe-4S clusters for at least IspG. The polypeptide is Iron-sulfur cluster insertion protein ErpA (Histophilus somni (strain 2336) (Haemophilus somnus)).